The sequence spans 64 residues: Orcokinin peptides (64 aa).

2 consecutive propeptides follow at residues 1 to 6 (MNIRPG) and 23 to 24 (NI).

The protein belongs to the orcokinin family. In terms of tissue distribution, orcokinin-3 is expressed throughout the central nervous system (at protein level).

It is found in the secreted. Myotropic peptides. This Camponotus floridanus (Florida carpenter ant) protein is Orcokinin peptides.